Here is a 121-residue protein sequence, read N- to C-terminus: Large ribosomal subunit protein uL22 (121 aa).

This sequence belongs to the universal ribosomal protein uL22 family. Part of the 50S ribosomal subunit.

This protein binds specifically to 23S rRNA; its binding is stimulated by other ribosomal proteins, e.g. L4, L17, and L20. It is important during the early stages of 50S assembly. It makes multiple contacts with different domains of the 23S rRNA in the assembled 50S subunit and ribosome. In terms of biological role, the globular domain of the protein is located near the polypeptide exit tunnel on the outside of the subunit, while an extended beta-hairpin is found that lines the wall of the exit tunnel in the center of the 70S ribosome. This Arthrobacter sp. (strain FB24) protein is Large ribosomal subunit protein uL22.